Reading from the N-terminus, the 481-residue chain is Glutamyl-tRNA(Gln) amidotransferase subunit A (481 aa).

Residues Lys79 and Ser154 each act as charge relay system in the active site. Residues 136–157 (SAFGATKNPRNPEHVPGGSSGG) are disordered. Ser178 (acyl-ester intermediate) is an active-site residue.

This sequence belongs to the amidase family. GatA subfamily. Heterotrimer of A, B and C subunits.

It carries out the reaction L-glutamyl-tRNA(Gln) + L-glutamine + ATP + H2O = L-glutaminyl-tRNA(Gln) + L-glutamate + ADP + phosphate + H(+). Its function is as follows. Allows the formation of correctly charged Gln-tRNA(Gln) through the transamidation of misacylated Glu-tRNA(Gln) in organisms which lack glutaminyl-tRNA synthetase. The reaction takes place in the presence of glutamine and ATP through an activated gamma-phospho-Glu-tRNA(Gln). This is Glutamyl-tRNA(Gln) amidotransferase subunit A from Lachnospira eligens (strain ATCC 27750 / DSM 3376 / VPI C15-48 / C15-B4) (Eubacterium eligens).